Consider the following 336-residue polypeptide: MRPILLSGHERSLTQIKFNRDGDLLFSVSKDKIVCAWWTANGERLGTYNGHLGAVWTVDVSPNTVLLATGSADNSVRLWNVKTGECVKVWEFPTAVKRVEFSPDGSQLLAVTEKRMGFLGAISVLDISYEDNFQNQADEPSLRITCNESKATVAGWSYLGKYIIAGHEDGSVSQYDAKTGDQLENVQAHEFDHQINDIQFSADRTYFITASKDKSAKLISSRNLAILKTYVADTPLNSATITPKKDYVILGGGQAAMDVTTTSARQGKFEARFYHKVFEDEIGRVRGHFGPLNTVGVHPNGTAYASGGEDGYVRVHHFDKPYFDFMYEVEREQMRK.

WD repeat units follow at residues 8 to 47, 50 to 91, 146 to 185, 190 to 229, and 287 to 326; these read GHER…RLGT, GHLG…KVWE, CNES…QLEN, EFDH…ILKT, and GHFG…FDFM.

The protein belongs to the eIF-3 subunit I family. In terms of assembly, component of the eukaryotic translation initiation factor 3 (eIF-3) complex.

The protein resides in the cytoplasm. Functionally, component of the eukaryotic translation initiation factor 3 (eIF-3) complex, which is involved in protein synthesis of a specialized repertoire of mRNAs and, together with other initiation factors, stimulates binding of mRNA and methionyl-tRNAi to the 40S ribosome. The eIF-3 complex specifically targets and initiates translation of a subset of mRNAs involved in cell proliferation. This chain is Eukaryotic translation initiation factor 3 subunit I (tif34), found in Aspergillus terreus (strain NIH 2624 / FGSC A1156).